The chain runs to 418 residues: Thermolabile hemolysin (418 aa).

Residues 1 to 19 (MMKKTITLLTALLPLASAV) form the signal peptide. S153 (nucleophile) is an active-site residue. Residues D390 and H393 contribute to the active site.

This sequence belongs to the 'GDSL' lipolytic enzyme family. In terms of processing, there are two forms of LDH. The LDH(S) may be a protein in which 13 residues of the N-terminal of LDH(L) are deleted.

The protein localises to the secreted. In terms of biological role, phospholipase hydrolyzing both fatty acid esters of phospholipid, i.e. it hydrolyzes phosphatidylcholine (PC) to lysophosphatidylcholine (LPC) and then LPC to glycerophosphorylcholine (GPC). The sequence is that of Thermolabile hemolysin from Vibrio parahaemolyticus serotype O3:K6 (strain RIMD 2210633).